A 475-amino-acid chain; its full sequence is Ribulose bisphosphate carboxylase large chain (475 aa).

Positions methionine 1–serine 2 are excised as a propeptide. Proline 3 carries the N-acetylproline modification. Position 14 is an N6,N6,N6-trimethyllysine (lysine 14). 2 residues coordinate substrate: asparagine 123 and threonine 173. Lysine 175 serves as the catalytic Proton acceptor. Lysine 177 lines the substrate pocket. The Mg(2+) site is built by lysine 201, aspartate 203, and glutamate 204. At lysine 201 the chain carries N6-carboxylysine. The active-site Proton acceptor is histidine 294. Substrate is bound by residues arginine 295, histidine 327, and serine 379.

It belongs to the RuBisCO large chain family. Type I subfamily. Heterohexadecamer of 8 large chains and 8 small chains; disulfide-linked. The disulfide link is formed within the large subunit homodimers. Requires Mg(2+) as cofactor. The disulfide bond which can form in the large chain dimeric partners within the hexadecamer appears to be associated with oxidative stress and protein turnover.

Its subcellular location is the plastid. The protein resides in the chloroplast. The catalysed reaction is 2 (2R)-3-phosphoglycerate + 2 H(+) = D-ribulose 1,5-bisphosphate + CO2 + H2O. It carries out the reaction D-ribulose 1,5-bisphosphate + O2 = 2-phosphoglycolate + (2R)-3-phosphoglycerate + 2 H(+). Functionally, ruBisCO catalyzes two reactions: the carboxylation of D-ribulose 1,5-bisphosphate, the primary event in carbon dioxide fixation, as well as the oxidative fragmentation of the pentose substrate in the photorespiration process. Both reactions occur simultaneously and in competition at the same active site. This chain is Ribulose bisphosphate carboxylase large chain, found in Equisetum arvense (Field horsetail).